Consider the following 480-residue polypeptide: Major capsid protein (480 aa).

The protein localises to the virion. Major protein of the capsid. The polypeptide is Major capsid protein (MCP-1) (Trichoplusia ni ascovirus 2c (TnAV-2c)).